The chain runs to 440 residues: Serine hydroxymethyltransferase (440 aa).

(6S)-5,6,7,8-tetrahydrofolate-binding positions include Leu-119 and 123-125; that span reads GHL. Lys-228 is subject to N6-(pyridoxal phosphate)lysine. 370–372 contributes to the (6S)-5,6,7,8-tetrahydrofolate binding site; sequence SPF.

The protein belongs to the SHMT family. Homodimer. Requires pyridoxal 5'-phosphate as cofactor.

Its subcellular location is the cytoplasm. It catalyses the reaction (6R)-5,10-methylene-5,6,7,8-tetrahydrofolate + glycine + H2O = (6S)-5,6,7,8-tetrahydrofolate + L-serine. It participates in one-carbon metabolism; tetrahydrofolate interconversion. The protein operates within amino-acid biosynthesis; glycine biosynthesis; glycine from L-serine: step 1/1. Functionally, catalyzes the reversible interconversion of serine and glycine with tetrahydrofolate (THF) serving as the one-carbon carrier. This reaction serves as the major source of one-carbon groups required for the biosynthesis of purines, thymidylate, methionine, and other important biomolecules. Also exhibits THF-independent aldolase activity toward beta-hydroxyamino acids, producing glycine and aldehydes, via a retro-aldol mechanism. The protein is Serine hydroxymethyltransferase of Chlorobium luteolum (strain DSM 273 / BCRC 81028 / 2530) (Pelodictyon luteolum).